The chain runs to 157 residues: Peptide methionine sulfoxide reductase MsrB (157 aa).

The 124-residue stretch at 14–137 folds into the MsrB domain; the sequence is DNDLRERLTP…NSAALRFVPL (124 aa). Cys-126 serves as the catalytic Nucleophile.

The protein belongs to the MsrB Met sulfoxide reductase family.

It catalyses the reaction L-methionyl-[protein] + [thioredoxin]-disulfide + H2O = L-methionyl-(R)-S-oxide-[protein] + [thioredoxin]-dithiol. The polypeptide is Peptide methionine sulfoxide reductase MsrB (Deinococcus radiodurans (strain ATCC 13939 / DSM 20539 / JCM 16871 / CCUG 27074 / LMG 4051 / NBRC 15346 / NCIMB 9279 / VKM B-1422 / R1)).